Reading from the N-terminus, the 317-residue chain is Small ribosomal subunit protein RACK1 (317 aa).

WD repeat units lie at residues 13 to 44 (GHSG…IMWK), 61 to 91 (GHSH…RLWD), 103 to 133 (GHTK…KLWN), 146 to 178 (GHTE…KVWN), 190 to 220 (GHTG…MLWD), 231 to 260 (DSGD…KIWD), and 281 to 311 (AEPP…RVWQ).

Belongs to the WD repeat G protein beta family. Ribosomal protein RACK1 subfamily.

It is found in the cytoplasm. Involved in the recruitment, assembly and/or regulation of a variety of signaling molecules. Interacts with a wide variety of proteins and plays a role in many cellular processes. Required for VANGL2 membrane localization, inhibits Wnt signaling and regulates cellular polarization and oriented cell division during gastrulation. This is Small ribosomal subunit protein RACK1 (gnb2l1) from Oreochromis niloticus (Nile tilapia).